We begin with the raw amino-acid sequence, 218 residues long: MDAVVKLFKEQAETEAQRQMPVHRPVDAPRPSRAEAEAAVRTLLAYIGEDPHREGLQETPARVIRSYDEIYGGYALSPDDVLDRTFGEIGSFDDFVLLKDIPFTSHCEHHMVPFMGKAHVAYFPVERVVGLSKIARLVDLYARRLQTQEHLTSQITTALDEALKPRGVAVMIEAEHMCMSMRGILKPGVTTLTSQFTGAFRDDPAEQVRFITMLRGLR.

Positions 107, 110, and 178 each coordinate Zn(2+).

Belongs to the GTP cyclohydrolase I family. Homomer.

It carries out the reaction GTP + H2O = 7,8-dihydroneopterin 3'-triphosphate + formate + H(+). It participates in cofactor biosynthesis; 7,8-dihydroneopterin triphosphate biosynthesis; 7,8-dihydroneopterin triphosphate from GTP: step 1/1. The protein is GTP cyclohydrolase 1 of Azorhizobium caulinodans (strain ATCC 43989 / DSM 5975 / JCM 20966 / LMG 6465 / NBRC 14845 / NCIMB 13405 / ORS 571).